Reading from the N-terminus, the 339-residue chain is MAIVYGAILFQIILIACAEFPPEWHAWKATHSISYESEHEERRRHVVWQQNQEYIDQHNKYKEQFGYTLEMNKFGDMSNAEFAELMMCVQDYNHHGNLTESLLADNKFKGRVREYQAPATVSLPETVDWRTGGAVTHVKDQLRCGCSYAFAAVGALEGAAALARGRTASLSEQNVLDCSVPYGNHGCSCEDVNNAFMYVIDNGGLDTTSSYPYVSRQYYCKFKSSGVGATATGIVTISSGDESSLESALATAGPVAVYIDASHSSFQFYKYGVLNVPNCSRSKLSHAMILIGYGTTSSKKYWLLKNSWGPNWGISGYIKMSRGMSNQCGIATYASFPTL.

The first 18 residues, 1–18, serve as a signal peptide directing secretion; it reads MAIVYGAILFQIILIACA. Positions 19–122 are excised as a propeptide; that stretch reads EFPPEWHAWK…REYQAPATVS (104 aa). Leu123 is modified (n,N-dimethylleucine; alternate). Position 123 is an N-methylleucine; alternate (Leu123). The residue at position 188 (Ser188) is a Phosphoserine. Tyr219 carries the phosphotyrosine modification. Residues His286 and Asn306 contribute to the active site. Residue Ser335 is modified to Phosphoserine.

The protein belongs to the peptidase C1 family. As to quaternary structure, homodimer. Homodimerization occurs as a result of non-covalent interactions and not through disulfide linkages between the two monomers.

Polymerizes silica around the axial filament during spicule formation. This is Silicatein from Petrosia ficiformis (Common Mediterranean sponge).